The sequence spans 478 residues: Putative indole-3-acetic acid-amido synthetase GH3.10 (478 aa).

This sequence belongs to the IAA-amido conjugating enzyme family.

Functionally, may catalyze the synthesis of indole-3-acetic acid (IAA)-amino acid conjugates, providing a mechanism for the plant to cope with the presence of excess auxin. This chain is Putative indole-3-acetic acid-amido synthetase GH3.10 (GH3.10), found in Oryza sativa subsp. japonica (Rice).